The sequence spans 503 residues: Cytochrome P450 11B1, mitochondrial (503 aa).

A mitochondrion-targeting transit peptide spans methionine 1 to leucine 24. Cysteine 450 contributes to the heme binding site.

It belongs to the cytochrome P450 family. Requires heme as cofactor.

The protein resides in the mitochondrion inner membrane. The enzyme catalyses a steroid + 2 reduced [adrenodoxin] + O2 + 2 H(+) = an 11beta-hydroxysteroid + 2 oxidized [adrenodoxin] + H2O. It catalyses the reaction 11-deoxycortisol + 2 reduced [adrenodoxin] + O2 + 2 H(+) = cortisol + 2 oxidized [adrenodoxin] + H2O. The catalysed reaction is 21-hydroxyprogesterone + 2 reduced [adrenodoxin] + O2 + 2 H(+) = corticosterone + 2 oxidized [adrenodoxin] + H2O. It carries out the reaction corticosterone + 2 reduced [adrenodoxin] + O2 + 2 H(+) = 18-hydroxycorticosterone + 2 oxidized [adrenodoxin] + H2O. The enzyme catalyses 18-hydroxycorticosterone + 2 reduced [adrenodoxin] + O2 + 2 H(+) = aldosterone + 2 oxidized [adrenodoxin] + 2 H2O. It catalyses the reaction 21-hydroxyprogesterone + 2 reduced [adrenodoxin] + O2 + 2 H(+) = 19-hydroxy-11-deoxycorticosterone + 2 oxidized [adrenodoxin] + H2O. The catalysed reaction is 19-hydroxy-11-deoxycorticosterone + 2 reduced [adrenodoxin] + O2 + 2 H(+) = 19-oxo-11-deoxycorticosterone + 2 oxidized [adrenodoxin] + 2 H2O. It functions in the pathway steroid biosynthesis; glucocorticoid biosynthesis. The protein operates within steroid hormone biosynthesis. Its function is as follows. A cytochrome P450 monooxygenase that catalyzes the biosynthesis of aldosterone and other adrenal corticoids. Differing from other species (such as human, rat and mice), it is able to catalyze three sequential oxidative reactions of 11-deoxycorticosterone (21-hydroxyprogesterone), namely 11-beta hydroxylation, followed by two successive oxidations at C18 yielding 18-hydroxy and then 18-oxo intermediates, and ending with the formation of aldosterone. Steroid 11beta, 18- and 19-hydroxylase. Mechanistically, uses molecular oxygen inserting one oxygen atom into a substrate and reducing the second into a water molecule. Two electrons are provided by NADPH via a two-protein mitochondrial transfer system comprising flavoprotein FDXR (adrenodoxin/ferredoxin reductase) and nonheme iron-sulfur protein FDX1 or FDX2 (adrenodoxin/ferredoxin). In Ovis aries (Sheep), this protein is Cytochrome P450 11B1, mitochondrial (CYP11B1).